The sequence spans 171 residues: MHQVISATTNPAKIQAILQAFEEIFGEGSCHITPVAVESGVPEQPFGSEETRAGARNRVDNAQRLHPQADFWVAIEAGINDDATFSWVVIDNGVQRGEARSATLPLPAVILDRVRQGEALGPVMSHYTGIDEIGRKEGAIGVFTAGKLTRSSVYYQAVILALSPFHNAVYR.

Position 8–13 (8–13 (TTNPAK)) interacts with substrate. Residues glutamate 38 and glutamine 68 each coordinate Mg(2+).

It belongs to the YjjX NTPase family. Homodimer. Requires Mg(2+) as cofactor. Mn(2+) serves as cofactor.

It carries out the reaction XTP + H2O = XDP + phosphate + H(+). The catalysed reaction is ITP + H2O = IDP + phosphate + H(+). Functionally, phosphatase that hydrolyzes non-canonical purine nucleotides such as XTP and ITP to their respective diphosphate derivatives. Probably excludes non-canonical purines from DNA/RNA precursor pool, thus preventing their incorporation into DNA/RNA and avoiding chromosomal lesions. This is Inosine/xanthosine triphosphatase (yjjX) from Salmonella paratyphi C (strain RKS4594).